A 404-amino-acid chain; its full sequence is MDMMKKRKLDENGNGLNTNGGGTIGPTRLSPQDARKIIERFTTDQLLDLLQEAIVRHPDVLESVRLTADSDISQRKLFIRGLAADTTTEGLRSLFSSYGDLEEAIVILDKVTGKSKGYGFVTFMHVDGALLALKEPSKKIDGRVTVTQLAASGNQGTGSQIADISMRKIYVANVPFDMPADRLLNHFMAYGDVEEGPLGFDKVTGKSRGFALFVYKTAEGAQAALADPVKVIDGKHLNCKLAVDGKKGGKPGMPQAQDGGSGHGHVHGEGMGMVRPAGPYGAAGGISAYGGYSGGPPAHHMNSTHSSMGVGSAGYGGHYGGYGGPGGTGVYGGLGGGYGGPGTGSGQYRMPPSSMPGGGGYPESGHYGLSSSAGYPGQHHQAVGTSPVPRVPHGGMYPNGPPNY.

Residues 1-29 (MDMMKKRKLDENGNGLNTNGGGTIGPTRL) form a disordered region. 2 consecutive RRM domains span residues 75 to 152 (RKLF…LAAS) and 167 to 248 (RKIY…GKKG). Disordered regions lie at residues 246-270 (KKGGKPGMPQAQDGGSGHGHVHGEG) and 344-404 (GSGQ…PPNY).

As to expression, expressed in root apical and lateral meristems, young leaves and embryos.

It localises to the nucleus. Heterogeneous nuclear ribonucleoprotein (hnRNP)-like protein that acts as a component of a complex regulating the turnover of mRNAs in the nucleus. Binds with high affinity to RNA molecules that contain U-rich sequences in 3'-UTRs. May function in complex with UBP1 and contribute to the stabilization of mRNAs in the nucleus. The polypeptide is UBP1-associated protein 2C (UBA2C) (Arabidopsis thaliana (Mouse-ear cress)).